The following is a 343-amino-acid chain: Sodium/bile acid cotransporter 7 (343 aa).

Over 1–10 (MGLLERLRKE) the chain is Cytoplasmic. Residues 11-31 (WFIVGIILVIAAAKLEPTIGG) form a helical membrane-spanning segment. Residues 32–37 (KGGPLK) are Extracellular-facing. The chain crosses the membrane as a helical span at residues 38-58 (PEITITYIAVSAIFFNSGLSL). Topologically, residues 59–71 (KTEELTNALMHVK) are cytoplasmic. A helical transmembrane segment spans residues 72–92 (LHLFVQLFTLVFFPTAIWVFL). Topologically, residues 93–116 (QVLSLTPINEWLLKGLQTVSCMPP) are extracellular. Residues 117–137 (PVSSAVILTKAVGGNEAAAIF) form a helical membrane-spanning segment. Residue Asn-138 is a topological domain, cytoplasmic. The helical transmembrane segment at 139 to 159 (SAFGSFLGIVVTPLLLLLFLG) threads the bilayer. The Extracellular segment spans residues 160–163 (SSSS). Residues 164-184 (VPFTSIFSQLFMTVVVPLIIG) form a helical membrane-spanning segment. The Cytoplasmic segment spans residues 185–201 (QIVRRYIKDWLERKKPP). The helical transmembrane segment at 202–222 (FGAISSCVLLMIIYTTFCDTF) threads the bilayer. At 223–234 (SNPNIDLDTFSL) the chain is on the extracellular side. A helical membrane pass occupies residues 235–255 (VIIVFIIFFIQLAFMLLTFLF). Residues 256-270 (STSKNTGFTPADTVA) lie on the Cytoplasmic side of the membrane. The helical transmembrane segment at 271–291 (IVFCSTHKSLTLGIPMLKIVF) threads the bilayer. Residues 292–298 (AGYEHLS) lie on the Extracellular side of the membrane. A helical transmembrane segment spans residues 299–319 (LISVPLLIYHPAQILLGSVLV). Topologically, residues 320 to 343 (PTIKSWMLSRQKALKLTRQPKVPL) are cytoplasmic.

This sequence belongs to the bile acid:sodium symporter (BASS) (TC 2.A.28) family.

It localises to the cell membrane. The protein localises to the endoplasmic reticulum membrane. Its subcellular location is the golgi apparatus membrane. Its function is as follows. Involved in teeth and skeletal development. Has an essential role in the biosynthesis and trafficking of glycosaminoglycans and glycoproteins to produce a proper functioning extracellular matrix. Required for extracellular matrix mineralization. Also involved in the regulation of cellular calcium homeostasis. Does not show transport activity towards bile acids or steroid sulfates. The sequence is that of Sodium/bile acid cotransporter 7 (slc10a7) from Xenopus tropicalis (Western clawed frog).